Here is a 185-residue protein sequence, read N- to C-terminus: Elongation factor P (185 aa).

Belongs to the elongation factor P family.

The protein localises to the cytoplasm. The protein operates within protein biosynthesis; polypeptide chain elongation. Functionally, involved in peptide bond synthesis. Stimulates efficient translation and peptide-bond synthesis on native or reconstituted 70S ribosomes in vitro. Probably functions indirectly by altering the affinity of the ribosome for aminoacyl-tRNA, thus increasing their reactivity as acceptors for peptidyl transferase. The polypeptide is Elongation factor P (Streptococcus pyogenes serotype M5 (strain Manfredo)).